Here is a 370-residue protein sequence, read N- to C-terminus: 3-dehydroquinate synthase (370 aa).

NAD(+) contacts are provided by residues glycine 107–aspartate 111, threonine 131–serine 132, lysine 144, and lysine 153. 3 residues coordinate Zn(2+): glutamate 186, histidine 249, and histidine 267.

It belongs to the sugar phosphate cyclases superfamily. Dehydroquinate synthase family. The cofactor is Co(2+). It depends on Zn(2+) as a cofactor. NAD(+) is required as a cofactor.

It is found in the cytoplasm. The enzyme catalyses 7-phospho-2-dehydro-3-deoxy-D-arabino-heptonate = 3-dehydroquinate + phosphate. Its pathway is metabolic intermediate biosynthesis; chorismate biosynthesis; chorismate from D-erythrose 4-phosphate and phosphoenolpyruvate: step 2/7. Functionally, catalyzes the conversion of 3-deoxy-D-arabino-heptulosonate 7-phosphate (DAHP) to dehydroquinate (DHQ). In Ruegeria pomeroyi (strain ATCC 700808 / DSM 15171 / DSS-3) (Silicibacter pomeroyi), this protein is 3-dehydroquinate synthase.